We begin with the raw amino-acid sequence, 368 residues long: Multifunctional CCA protein (368 aa).

Positions 8 and 11 each coordinate ATP. The CTP site is built by glycine 8 and arginine 11. Mg(2+) contacts are provided by aspartate 21 and aspartate 23. Residues arginine 91, arginine 137, and arginine 140 each coordinate ATP. CTP is bound by residues arginine 91, arginine 137, and arginine 140.

The protein belongs to the tRNA nucleotidyltransferase/poly(A) polymerase family. Bacterial CCA-adding enzyme type 1 subfamily. In terms of assembly, monomer. Can also form homodimers and oligomers. Requires Mg(2+) as cofactor. It depends on Ni(2+) as a cofactor.

It carries out the reaction a tRNA precursor + 2 CTP + ATP = a tRNA with a 3' CCA end + 3 diphosphate. It catalyses the reaction a tRNA with a 3' CCA end + 2 CTP + ATP = a tRNA with a 3' CCACCA end + 3 diphosphate. Functionally, catalyzes the addition and repair of the essential 3'-terminal CCA sequence in tRNAs without using a nucleic acid template. Adds these three nucleotides in the order of C, C, and A to the tRNA nucleotide-73, using CTP and ATP as substrates and producing inorganic pyrophosphate. tRNA 3'-terminal CCA addition is required both for tRNA processing and repair. Also involved in tRNA surveillance by mediating tandem CCA addition to generate a CCACCA at the 3' terminus of unstable tRNAs. While stable tRNAs receive only 3'-terminal CCA, unstable tRNAs are marked with CCACCA and rapidly degraded. In Pseudomonas putida (strain ATCC 47054 / DSM 6125 / CFBP 8728 / NCIMB 11950 / KT2440), this protein is Multifunctional CCA protein.